Here is a 102-residue protein sequence, read N- to C-terminus: Anti-lipopolysaccharide factor (102 aa).

Cysteines 32 and 53 form a disulfide.

In terms of biological role, binds tightly to LPS and thus specifically inhibits the LPS-mediated activation of the hemolymph coagulation. It has a strong antibacterial effect especially on the growth of Gram-negative bacteria. The protein is Anti-lipopolysaccharide factor of Tachypleus tridentatus (Japanese horseshoe crab).